The primary structure comprises 498 residues: Galactose-1-phosphate uridylyltransferase (498 aa).

It belongs to the galactose-1-phosphate uridylyltransferase type 2 family.

It localises to the cytoplasm. It catalyses the reaction alpha-D-galactose 1-phosphate + UDP-alpha-D-glucose = alpha-D-glucose 1-phosphate + UDP-alpha-D-galactose. It functions in the pathway carbohydrate metabolism; galactose metabolism. This Clostridium perfringens (strain SM101 / Type A) protein is Galactose-1-phosphate uridylyltransferase.